Consider the following 177-residue polypeptide: Plasmid transfer protein TraF (177 aa).

The first 30 residues, 1-30, serve as a signal peptide directing secretion; that stretch reads MSRFQRLTKYVAIGGGAALLLAGAAYLAGA.

It belongs to the peptidase S26C family.

Its subcellular location is the periplasm. Its function is as follows. Required for donor-specific phage sensitivity. May be involved in pilus assembly. In Escherichia coli, this protein is Plasmid transfer protein TraF (traF).